A 336-amino-acid chain; its full sequence is Glyceraldehyde-3-phosphate dehydrogenase (336 aa).

Residues Arg12–Ile13, Asp34, Arg78, and Thr121 each bind NAD(+). D-glyceraldehyde 3-phosphate-binding positions include Ser151–Thr153, Thr182, Arg199, Thr212–Gly213, and Arg235. Residue Cys152 is the Nucleophile of the active site. NAD(+) is bound at residue Asn316.

The protein belongs to the glyceraldehyde-3-phosphate dehydrogenase family. In terms of assembly, homotetramer.

Its subcellular location is the cytoplasm. It catalyses the reaction D-glyceraldehyde 3-phosphate + phosphate + NAD(+) = (2R)-3-phospho-glyceroyl phosphate + NADH + H(+). It functions in the pathway carbohydrate degradation; glycolysis; pyruvate from D-glyceraldehyde 3-phosphate: step 1/5. Functionally, catalyzes the oxidative phosphorylation of glyceraldehyde 3-phosphate (G3P) to 1,3-bisphosphoglycerate (BPG) using the cofactor NAD. The first reaction step involves the formation of a hemiacetal intermediate between G3P and a cysteine residue, and this hemiacetal intermediate is then oxidized to a thioester, with concomitant reduction of NAD to NADH. The reduced NADH is then exchanged with the second NAD, and the thioester is attacked by a nucleophilic inorganic phosphate to produce BPG. The protein is Glyceraldehyde-3-phosphate dehydrogenase (gap) of Streptococcus dysgalactiae subsp. equisimilis (Streptococcus equisimilis).